The sequence spans 409 residues: TNF receptor-associated factor family protein DDB_G0273435/DDB_G0273505 (409 aa).

Residues 20-59 form an RING-type; degenerate zinc finger; that stretch reads CQLCCNLMNESVSCPNGHCLCKGCFHKQIETVKSECPICC. 2 consecutive TRAF-type zinc fingers follow at residues 75-145 and 145-201; these read KHIN…EIEN and NHQD…HELS. Positions 221–250 form a coiled coil; it reads HQSLLKSTSKQLKQLRSSCEELETKLINND. Positions 252–380 constitute an MATH domain; it reads SFNGRWIIKQ…NDQLIIKFNI (129 aa).

This sequence belongs to the TNF receptor-associated factor family. A subfamily.

The protein localises to the cytoplasm. Probable adapter protein and signal transducer that links members of the tumor necrosis factor receptor family to different signaling pathways by association with the receptor cytoplasmic domain and kinases. This Dictyostelium discoideum (Social amoeba) protein is TNF receptor-associated factor family protein DDB_G0273435/DDB_G0273505.